The chain runs to 402 residues: L-threonine ammonia-lyase (402 aa).

Lysine 51 bears the N6-(pyridoxal phosphate)lysine mark. Residues asparagine 78, glycine 178–leucine 181, and serine 302 contribute to the pyridoxal 5'-phosphate site. In terms of domain architecture, ACT spans lysine 327 to lysine 402.

It belongs to the serine/threonine dehydratase family. Pyridoxal 5'-phosphate serves as cofactor.

The catalysed reaction is L-threonine = 2-oxobutanoate + NH4(+). It catalyses the reaction L-serine = pyruvate + NH4(+). It participates in amino-acid biosynthesis; L-isoleucine biosynthesis; 2-oxobutanoate from L-threonine: step 1/1. Functionally, catalyzes the conversion of threonine to 2-oxobutanoate and ammonia. Functions in the threonine-dependent pathway of isoleucine biosynthesis, which is the minor pathway for isoleucine biosynthesis in G.sulfurreducens. Also displays serine ammonia-lyase activity, yielding pyruvate from L-serine. The chain is L-threonine ammonia-lyase from Geobacter sulfurreducens (strain ATCC 51573 / DSM 12127 / PCA).